An 84-amino-acid chain; its full sequence is Small ribosomal subunit protein bS20 (84 aa).

Positions 1–22 are disordered; it reads MPAPTKRERQNRKRFERNRSVR. Residues 9-22 are compositionally biased toward basic residues; sequence RQNRKRFERNRSVR.

It belongs to the bacterial ribosomal protein bS20 family.

Its function is as follows. Binds directly to 16S ribosomal RNA. The sequence is that of Small ribosomal subunit protein bS20 from Rubrobacter xylanophilus (strain DSM 9941 / JCM 11954 / NBRC 16129 / PRD-1).